Here is a 267-residue protein sequence, read N- to C-terminus: Large ribosomal subunit protein uL4 (267 aa).

The protein belongs to the universal ribosomal protein uL4 family. As to quaternary structure, part of the 50S ribosomal subunit.

One of the primary rRNA binding proteins, this protein initially binds near the 5'-end of the 23S rRNA. It is important during the early stages of 50S assembly. It makes multiple contacts with different domains of the 23S rRNA in the assembled 50S subunit and ribosome. Its function is as follows. Forms part of the polypeptide exit tunnel. In Saccharolobus islandicus (strain L.S.2.15 / Lassen #1) (Sulfolobus islandicus), this protein is Large ribosomal subunit protein uL4.